Reading from the N-terminus, the 429-residue chain is Stromal membrane-associated protein 2 (429 aa).

In terms of domain architecture, Arf-GAP spans 13 to 137 (QAVLANLLLE…LDINAFRKEK (125 aa)). The C4-type zinc finger occupies 28-51 (CADCQSKGPRWASWNIGVFICIRC). Residue serine 127 is modified to Phosphoserine. Residues 138–172 (DNKWKRGSEPAPEKKMEPVVFEKVKMPQKKEDPQL) are compositionally biased toward basic and acidic residues. Disordered regions lie at residues 138-181 (DNKW…PKSK) and 217-263 (VSSP…KKQL). Positions 163-232 (MPQKKEDPQL…SVSRKVVGSM (70 aa)) are interaction with clathrin heavy chains. Positions 217-231 (VSSPSSSVSRKVVGS) are enriched in low complexity. 5 positions are modified to phosphoserine: serine 219, serine 223, serine 225, serine 231, and serine 240. The segment covering 253–263 (SKSEETSKKQL) has biased composition (basic and acidic residues). The interaction with PICALM stretch occupies residues 340–429 (MGGMQASMMG…NQTLSPQMWK (90 aa)).

Interacts with ARF1. Interacts with PICALM and clathrin heavy chains.

It is found in the cytoplasm. Functionally, GTPase activating protein that acts on ARF1. Can also activate ARF6 (in vitro). May play a role in clathrin-dependent retrograde transport from early endosomes to the trans-Golgi network. This chain is Stromal membrane-associated protein 2 (SMAP2), found in Bos taurus (Bovine).